Reading from the N-terminus, the 99-residue chain is SAGA-associated factor 11 (99 aa).

The SGF11-type zinc-finger motif lies at 71-92 (IHCENCGRDVSANRLAAHLQRC).

The protein belongs to the SGF11 family. As to quaternary structure, component of the 1.8 MDa SAGA transcription coactivator-HAT complex. SAGA is built of 5 distinct domains with specialized functions. Within the SAGA complex, SUS1, SGF11, SGF73 and UBP8 form an additional subcomplex of SAGA called the DUB module (deubiquitination module). Interacts directly with SGF73, SUS1 and UBP8.

Its subcellular location is the nucleus. Functions as a component of the transcription regulatory histone acetylation (HAT) complex SAGA. At the promoters, SAGA is required for recruitment of the basal transcription machinery. It influences RNA polymerase II transcriptional activity through different activities such as TBP interaction and promoter selectivity, interaction with transcription activators, and chromatin modification through histone acetylation and deubiquitination. SAGA acetylates nucleosomal histone H3 to some extent (to form H3K9ac, H3K14ac, H3K18ac and H3K23ac). SAGA interacts with DNA via upstream activating sequences (UASs). Involved in transcriptional regulation of a subset of SAGA-regulated genes. Within the SAGA complex, participates in a subcomplex, that specifically deubiquitinates histones H2B. The protein is SAGA-associated factor 11 of Saccharomyces cerevisiae (strain RM11-1a) (Baker's yeast).